The sequence spans 137 residues: Phosphomevalonate dehydratase small subunit (137 aa).

The active-site Proton acceptor is the serine 62.

The protein belongs to the AcnX type II small subunit family. As to quaternary structure, heterodimer composed of a large subunit (PMDh-L) and a small subunit (PMDh-S).

The catalysed reaction is (R)-5-phosphomevalonate = (2E)-3-methyl-5-phosphooxypent-2-enoate + H2O. It participates in isoprenoid biosynthesis; isopentenyl diphosphate biosynthesis via mevalonate pathway. Its function is as follows. Component of a hydro-lyase that catalyzes the dehydration of mevalonate 5-phosphate (MVA5P) to form trans-anhydromevalonate 5-phosphate (tAHMP). Involved in the archaeal mevalonate (MVA) pathway, which provides fundamental precursors for isoprenoid biosynthesis, such as isopentenyl diphosphate (IPP) and dimethylallyl diphosphate (DMAPP). This Methanothrix thermoacetophila (strain DSM 6194 / JCM 14653 / NBRC 101360 / PT) (Methanosaeta thermophila) protein is Phosphomevalonate dehydratase small subunit.